We begin with the raw amino-acid sequence, 644 residues long: Chaperone protein HtpG (644 aa).

An a; substrate-binding region spans residues 1 to 352 (MNARVEQLEF…AQDMSLNVSR (352 aa)). The tract at residues 353 to 566 (EILQQDRQIK…AFGITPALAR (214 aa)) is b. The c stretch occupies residues 567 to 644 (LYRASGQDIP…ILADRLARTL (78 aa)).

This sequence belongs to the heat shock protein 90 family. In terms of assembly, homodimer.

Its subcellular location is the cytoplasm. Its function is as follows. Molecular chaperone. Has ATPase activity. The chain is Chaperone protein HtpG from Mycobacterium avium (strain 104).